The sequence spans 382 residues: Alkanesulfonate monooxygenase (382 aa).

It belongs to the SsuD family.

It catalyses the reaction an alkanesulfonate + FMNH2 + O2 = an aldehyde + FMN + sulfite + H2O + 2 H(+). Catalyzes the desulfonation of aliphatic sulfonates. The protein is Alkanesulfonate monooxygenase of Pseudomonas entomophila (strain L48).